The following is a 361-amino-acid chain: D-alanine--D-alanine ligase (361 aa).

One can recognise an ATP-grasp domain in the interval 134–344 (KLLLKSFDIP…FKDLVDNLID (211 aa)). Residue 167–222 (KEVLGYPVIVKPAVLGSSIGINVAYSENQIESFIKEALKYDLTIVIEKFIEAREIE) participates in ATP binding. Mg(2+)-binding residues include Asp-297, Glu-311, and Asn-313.

Belongs to the D-alanine--D-alanine ligase family. The cofactor is Mg(2+). Mn(2+) serves as cofactor.

It localises to the cytoplasm. It carries out the reaction 2 D-alanine + ATP = D-alanyl-D-alanine + ADP + phosphate + H(+). It functions in the pathway cell wall biogenesis; peptidoglycan biosynthesis. In terms of biological role, cell wall formation. The chain is D-alanine--D-alanine ligase from Borreliella burgdorferi (strain ZS7) (Borrelia burgdorferi).